Reading from the N-terminus, the 482-residue chain is Probable cytosol aminopeptidase (482 aa).

Residues lysine 251 and aspartate 256 each contribute to the Mn(2+) site. The active site involves lysine 263. 3 residues coordinate Mn(2+): aspartate 274, aspartate 333, and glutamate 335. Residue arginine 337 is part of the active site.

It belongs to the peptidase M17 family. Mn(2+) serves as cofactor.

It localises to the cytoplasm. It catalyses the reaction Release of an N-terminal amino acid, Xaa-|-Yaa-, in which Xaa is preferably Leu, but may be other amino acids including Pro although not Arg or Lys, and Yaa may be Pro. Amino acid amides and methyl esters are also readily hydrolyzed, but rates on arylamides are exceedingly low.. It carries out the reaction Release of an N-terminal amino acid, preferentially leucine, but not glutamic or aspartic acids.. In terms of biological role, presumably involved in the processing and regular turnover of intracellular proteins. Catalyzes the removal of unsubstituted N-terminal amino acids from various peptides. This is Probable cytosol aminopeptidase from Acinetobacter baumannii (strain SDF).